A 295-amino-acid chain; its full sequence is Glycine--tRNA ligase alpha subunit (295 aa).

It belongs to the class-II aminoacyl-tRNA synthetase family. Tetramer of two alpha and two beta subunits.

Its subcellular location is the cytoplasm. It carries out the reaction tRNA(Gly) + glycine + ATP = glycyl-tRNA(Gly) + AMP + diphosphate. The protein is Glycine--tRNA ligase alpha subunit of Shouchella clausii (strain KSM-K16) (Alkalihalobacillus clausii).